Here is a 744-residue protein sequence, read N- to C-terminus: Collagen alpha-1(VIII) chain (744 aa).

Positions 1 to 27 (MAVLPGPLQLLGVLLTISLSSIRLIQA) are cleaved as a signal peptide. A nonhelical region (NC2) region spans residues 29 to 117 (AYYGIKPLPP…GKEIPLASLR (89 aa)). Disordered regions lie at residues 115–393 (SLRG…GEPG) and 459–589 (GPKG…PDMG). The interval 118–571 (GEQGPRGEPG…PGPPGPPGPP (454 aa)) is triple-helical region (COL1). A compositionally biased stretch (pro residues) spans 128-137 (PRGPPGPPGL). Positions 168-178 (KPGAMGMPGAK) are enriched in low complexity. Gly residues-rich tracts occupy residues 203 to 217 (GLPG…GLPG) and 328 to 337 (GFPGGKGEQG). Low complexity-rich tracts occupy residues 466-496 (QKGV…LQGP) and 538-556 (AGLH…QGQP). Residues 558-581 (LPGPPGPPGPPGPPAVMPPTPPPQ) show a composition bias toward pro residues. A nonhelical region (NC1) region spans residues 572–744 (AVMPPTPPPQ…SFSGYLLYPM (173 aa)). Positions 611 to 744 (PAYEMPAFTA…SFSGYLLYPM (134 aa)) constitute a C1q domain.

As to quaternary structure, homotrimers, or heterotrimers in association with alpha 2(VIII) type collagens. Four homotrimers can form a tetrahedron stabilized by central interacting C-terminal NC1 trimers. In terms of processing, prolines at the third position of the tripeptide repeating unit (G-X-Y) are hydroxylated in some or all of the chains. Post-translationally, proteolytically cleaved by neutrophil elastase, in vitro. Proteolytic processing produces the C-terminal NC1 domain fragment, vastatin. Expressed primarily in the subendothelium of large blood vessels. Also expressed in arterioles and venules in muscle, heart, kidney, spleen, umbilical cord, liver and lung and is also found in connective tissue layers around hair follicles, around nerve bundles in muscle, in the dura of the optic nerve, in cornea and sclera, and in the perichondrium of cartilaginous tissues. In the kidney, expressed in mesangial cells, glomerular endothelial cells, and tubular epithelial cells. Also expressed in mast cells, and in astrocytes during the repair process. Expressed in Descemet's membrane. Specifically expressed in peritoneal fibroblasts and mesothelial cells.

The protein resides in the secreted. Its subcellular location is the extracellular space. It localises to the extracellular matrix. The protein localises to the basement membrane. Its function is as follows. Macromolecular component of the subendothelium. Major component of the Descemet's membrane (basement membrane) of corneal endothelial cells. Also a component of the endothelia of blood vessels. Necessary for migration and proliferation of vascular smooth muscle cells and thus, has a potential role in the maintenance of vessel wall integrity and structure, in particular in atherogenesis. Functionally, vastatin, the C-terminal fragment comprising the NC1 domain, inhibits aortic endothelial cell proliferation and causes cell apoptosis. This is Collagen alpha-1(VIII) chain (COL8A1) from Homo sapiens (Human).